Here is a 353-residue protein sequence, read N- to C-terminus: GTPase Obg (353 aa).

The Obg domain occupies 1–159 (MRFVDEVVIN…RVIRLELKLL (159 aa)). The 175-residue stretch at 160–334 (ADVGLLGMPN…LCTAIMQELT (175 aa)) folds into the OBG-type G domain. GTP contacts are provided by residues 166 to 173 (GMPNAGKS), 191 to 195 (FTTLH), 213 to 216 (DIPG), 284 to 287 (NKMD), and 315 to 317 (SAA). Mg(2+) is bound by residues Ser173 and Thr193.

The protein belongs to the TRAFAC class OBG-HflX-like GTPase superfamily. OBG GTPase family. In terms of assembly, monomer. Mg(2+) is required as a cofactor.

The protein resides in the cytoplasm. An essential GTPase which binds GTP, GDP and possibly (p)ppGpp with moderate affinity, with high nucleotide exchange rates and a fairly low GTP hydrolysis rate. Plays a role in control of the cell cycle, stress response, ribosome biogenesis and in those bacteria that undergo differentiation, in morphogenesis control. This is GTPase Obg from Dichelobacter nodosus (strain VCS1703A).